The chain runs to 419 residues: Double-stranded RNA-binding protein 1 (419 aa).

DRBM domains are found at residues 15–84 (VFKS…ELAK) and 101–170 (LCKN…AIQS). The Bipartite nuclear localization motif lies at 207-222 (KARKAQFKKKAQKGKR). Tandem repeats lie at residues 247–274 (EKIE…SVET), 275–302 (EKIE…SVET), 303–330 (EKIE…SVET), 331–358 (EKIE…SVET), 359–386 (EKIE…SVET), and 387–414 (EKIE…SVET). The tract at residues 247–414 (EKIETTPNLE…KEAAFGSVET (168 aa)) is 6 X 28 AA repeats of E-K-I-E-T-T-P-N-L-E-[PS]-[PS]-S-C-M-[NS]-G-L-K-E-A-A-F-G-S-V-E-T.

Homodimer. Heterodimer with DRB2, DRB4 or DRB5. Interacts with SE and DCL1. Interacts with RCF3, RS40 and RS41. As to expression, expressed in rosette and cauline leaves, stems, roots, flowers and siliques.

The protein resides in the nucleus. It is found in the nucleus speckle. Its function is as follows. Double-stranded RNA-binding protein involved in RNA-mediated post-transcriptional gene silencing (PTGS). Functions in the microRNAs (miRNAs) biogenesis by assisting DICER-LIKE 1 (DCL1) in the accurate processing from primary miRNAs (pri-miRNAs) to miRNAs in the nucleus. Forms a complex with SERRATE (SE) and DCL1 to promote accurate processing of pri-miRNAs by DCL1. Binds and assist DCL1 for accurate processing of precursor miRNAs (pre-miRNA). Indirectly involved in the production of trans-acting small interfering RNAs (ta-siRNAs) derived from the TAS1, TAS2 or TAS3 endogenous transcripts by participating in the production of their initiating miRNAs. Involved with argonaute 1 (AGO1) in the guide strand selection from miRNA duplexes, presumably by directional loading of the miRNA duplex (guide stand and passenger strand) onto the RNA-induced silencing complex (RISC) for passenger strand degradation. Does not participate in sense transgene-induced post-transcriptional gene silencing (S-PTGS). Involved in several plant development aspects and response to hormones through its role in miRNAs processing. This is Double-stranded RNA-binding protein 1 (DRB1) from Arabidopsis thaliana (Mouse-ear cress).